Consider the following 285-residue polypeptide: uncharacterized protein (285 aa).

The chain crosses the membrane as a helical span at residues 6–26 (IKYFSTIIVAVVAVLAGWWLW).

Belongs to the membrane fusion protein (MFP) (TC 8.A.1) family.

The protein localises to the membrane. This is an uncharacterized protein from Escherichia coli (strain K12).